Consider the following 339-residue polypeptide: NADH-quinone oxidoreductase subunit H (339 aa).

The next 9 membrane-spanning stretches (helical) occupy residues 9–29, 50–70, 82–102, 115–135, 161–181, 187–207, 235–255, 275–295, and 311–331; these read IFPL…LILC, PNVV…KLLF, ILFI…WAVI, VGVL…IIAG, MGLV…SGII, MPWW…ISVL, MGFA…SAMT, IPGF…FLWI, and GWKV…SVLV.

The protein belongs to the complex I subunit 1 family. In terms of assembly, NDH-1 is composed of 14 different subunits. Subunits NuoA, H, J, K, L, M, N constitute the membrane sector of the complex.

The protein resides in the cell inner membrane. It carries out the reaction a quinone + NADH + 5 H(+)(in) = a quinol + NAD(+) + 4 H(+)(out). Functionally, NDH-1 shuttles electrons from NADH, via FMN and iron-sulfur (Fe-S) centers, to quinones in the respiratory chain. The immediate electron acceptor for the enzyme in this species is believed to be ubiquinone. Couples the redox reaction to proton translocation (for every two electrons transferred, four hydrogen ions are translocated across the cytoplasmic membrane), and thus conserves the redox energy in a proton gradient. This subunit may bind ubiquinone. This chain is NADH-quinone oxidoreductase subunit H, found in Rickettsia felis (strain ATCC VR-1525 / URRWXCal2) (Rickettsia azadi).